The following is a 595-amino-acid chain: DNA mismatch repair protein MutL (595 aa).

Belongs to the DNA mismatch repair MutL/HexB family.

Functionally, this protein is involved in the repair of mismatches in DNA. It is required for dam-dependent methyl-directed DNA mismatch repair. May act as a 'molecular matchmaker', a protein that promotes the formation of a stable complex between two or more DNA-binding proteins in an ATP-dependent manner without itself being part of a final effector complex. The polypeptide is DNA mismatch repair protein MutL (Rhodopseudomonas palustris (strain ATCC BAA-98 / CGA009)).